Reading from the N-terminus, the 1480-residue chain is DNA polymerase zeta catalytic subunit (1480 aa).

Residues 403-488 form a disordered region; sequence DRSKFPKSPL…GDTRKAGKRL (86 aa). Positions 411-427 are enriched in polar residues; it reads PLNSSQEVTIHSSQDRQ. A compositionally biased stretch (basic and acidic residues) spans 457-468; the sequence is TKREIEFCRDLP. The span at 470 to 479 shows a compositional bias: polar residues; the sequence is RPTSSEPNQG. Zn(2+) contacts are provided by Cys-1381, Cys-1384, Cys-1400, and Cys-1403. Residues 1381 to 1403 form a CysA-type zinc finger; that stretch reads CSSCLKNNIEIIPDKINSLCSDC. 4 residues coordinate [4Fe-4S] cluster: Cys-1432, Cys-1435, Cys-1446, and Cys-1451. Positions 1432–1451 match the CysB motif motif; sequence CRGCSKLSSSDPVLCKSNSC.

This sequence belongs to the DNA polymerase type-B family. As to quaternary structure, forms DNA polymerase zeta with rev7. The cofactor is [4Fe-4S] cluster.

It localises to the mitochondrion. The protein localises to the nucleus. The enzyme catalyses DNA(n) + a 2'-deoxyribonucleoside 5'-triphosphate = DNA(n+1) + diphosphate. Its function is as follows. Nonessential DNA polymerase. Required for DNA damage induced mutagenesis. Involved in DNA repair, mitochondrial DNA repair and translesion synthesis. Has a role in the bypass of abasic (AP) sites. The polypeptide is DNA polymerase zeta catalytic subunit (rev3) (Schizosaccharomyces pombe (strain 972 / ATCC 24843) (Fission yeast)).